The following is a 90-amino-acid chain: Putative sodium channel toxin Ts35 (90 aa).

The N-terminal stretch at 1 to 22 is a signal peptide; it reads QDEVGLGSCSVIFVVGNEEGEA. The 65-residue stretch at 23 to 87 folds into the LCN-type CS-alpha/beta domain; that stretch reads KDGYAVGGDR…WGNPTLGPCL (65 aa). Intrachain disulfides connect Cys-33–Cys-86, Cys-37–Cys-61, Cys-46–Cys-66, and Cys-50–Cys-68.

This sequence belongs to the long (4 C-C) scorpion toxin superfamily. Sodium channel inhibitor family. As to expression, expressed by the venom gland.

Its subcellular location is the secreted. In terms of biological role, putative sodium channel toxin. The sequence is that of Putative sodium channel toxin Ts35 from Tityus serrulatus (Brazilian scorpion).